A 105-amino-acid chain; its full sequence is Small ribosomal subunit protein uS10 (105 aa).

Belongs to the universal ribosomal protein uS10 family. Part of the 30S ribosomal subunit.

Its function is as follows. Involved in the binding of tRNA to the ribosomes. The sequence is that of Small ribosomal subunit protein uS10 from Acaryochloris marina (strain MBIC 11017).